Here is a 593-residue protein sequence, read N- to C-terminus: Tectonic-1 (593 aa).

The signal sequence occupies residues 1–22; the sequence is MGSRGLPPLLLVLLNCYTSSST. Residues 37 to 72 are disordered; sequence KEDLNSTKATPTTLQPSLSPRTPGTPRAPERSGPRP. The N-linked (GlcNAc...) asparagine glycan is linked to Asn41. The segment covering 42–58 has biased composition (polar residues); sequence STKATPTTLQPSLSPRT. An N-linked (GlcNAc...) asparagine glycan is attached at Asn303. Arg486 carries the omega-N-methylarginine modification. Residue Asn536 is glycosylated (N-linked (GlcNAc...) asparagine).

Belongs to the tectonic family. As to quaternary structure, part of the tectonic-like complex (also named B9 complex).

It is found in the cytoplasm. It localises to the cytoskeleton. Its subcellular location is the cilium basal body. The protein localises to the secreted. Its function is as follows. Component of the tectonic-like complex, a complex localized at the transition zone of primary cilia and acting as a barrier that prevents diffusion of transmembrane proteins between the cilia and plasma membranes. Regulator of Hedgehog (Hh), required for both activation and inhibition of the Hh pathway in the patterning of the neural tube. During neural tube development, it is required for formation of the most ventral cell types and for full Hh pathway activation. Functions in Hh signal transduction to fully activate the pathway in the presence of high Hh levels and to repress the pathway in the absence of Hh signals. Modulates Hh signal transduction downstream of SMO and RAB23. This chain is Tectonic-1 (Tctn1), found in Mus musculus (Mouse).